A 624-amino-acid polypeptide reads, in one-letter code: Chaperone protein HtpG (624 aa).

An a; substrate-binding region spans residues 1–336; that stretch reads MKGQETRGFQ…SNDLPLNVSR (336 aa). Positions 337-552 are b; sequence EILQDSTVTR…ADEMSTQMAK (216 aa). Residues 553–624 are c; that stretch reads LFAAAGQSVP…IRRMNQLLVS (72 aa).

This sequence belongs to the heat shock protein 90 family. As to quaternary structure, homodimer.

The protein localises to the cytoplasm. In terms of biological role, molecular chaperone. Has ATPase activity. The sequence is that of Chaperone protein HtpG from Salmonella paratyphi A (strain ATCC 9150 / SARB42).